We begin with the raw amino-acid sequence, 110 residues long: UPF0060 membrane protein AHA_2410 (110 aa).

Helical transmembrane passes span 8–28 (GLFL…YLWL), 33–53 (SVWL…LLSL), 63–83 (AAYG…VDGI), and 87–107 (LWDL…MFAP).

The protein belongs to the UPF0060 family.

The protein resides in the cell inner membrane. This Aeromonas hydrophila subsp. hydrophila (strain ATCC 7966 / DSM 30187 / BCRC 13018 / CCUG 14551 / JCM 1027 / KCTC 2358 / NCIMB 9240 / NCTC 8049) protein is UPF0060 membrane protein AHA_2410.